The following is a 393-amino-acid chain: tRNA(Met) cytidine acetate ligase (393 aa).

Residues Gly-81, Asn-142, and Arg-167 each coordinate ATP.

Belongs to the TmcAL family.

It localises to the cytoplasm. It carries out the reaction cytidine(34) in elongator tRNA(Met) + acetate + ATP = N(4)-acetylcytidine(34) in elongator tRNA(Met) + AMP + diphosphate. In terms of biological role, catalyzes the formation of N(4)-acetylcytidine (ac(4)C) at the wobble position of elongator tRNA(Met), using acetate and ATP as substrates. First activates an acetate ion to form acetyladenylate (Ac-AMP) and then transfers the acetyl group to tRNA to form ac(4)C34. This is tRNA(Met) cytidine acetate ligase from Bacillus mycoides (strain KBAB4) (Bacillus weihenstephanensis).